Consider the following 252-residue polypeptide: Isoprenyl transferase (252 aa).

Asp-28 is an active-site residue. Position 28 (Asp-28) interacts with Mg(2+). Substrate is bound by residues 29–32 (GNGR), Trp-33, Arg-41, His-45, and 73–75 (STE). The Proton acceptor role is filled by Asn-76. Residues Trp-77, Arg-79, Arg-200, and 206-208 (RLS) each bind substrate. Glu-219 contacts Mg(2+).

It belongs to the UPP synthase family. In terms of assembly, homodimer. Requires Mg(2+) as cofactor.

Functionally, catalyzes the condensation of isopentenyl diphosphate (IPP) with allylic pyrophosphates generating different type of terpenoids. The sequence is that of Isoprenyl transferase from Streptococcus pneumoniae serotype 4 (strain ATCC BAA-334 / TIGR4).